Consider the following 371-residue polypeptide: Transposase for insertion sequence element IS421 (371 aa).

This sequence belongs to the transposase 11 family.

Involved in the transposition of the insertion sequence IS421. The sequence is that of Transposase for insertion sequence element IS421 from Escherichia coli.